Reading from the N-terminus, the 156-residue chain is Small ribosomal subunit protein uS7 (156 aa).

This sequence belongs to the universal ribosomal protein uS7 family. As to quaternary structure, part of the 30S ribosomal subunit. Contacts proteins S9 and S11.

One of the primary rRNA binding proteins, it binds directly to 16S rRNA where it nucleates assembly of the head domain of the 30S subunit. Is located at the subunit interface close to the decoding center, probably blocks exit of the E-site tRNA. The protein is Small ribosomal subunit protein uS7 of Thermobifida fusca (strain YX).